The chain runs to 370 residues: Probable neutral protease 2 homolog ARB_03949 (370 aa).

Positions Met1–Ala19 are cleaved as a signal peptide. Residues Tyr20–Arg188 constitute a propeptide that is removed on maturation. 2 disulfides stabilise this stretch: Cys196–Cys267 and Cys274–Cys292. Position 316 (His316) interacts with Zn(2+). Residue Glu317 is part of the active site. Residues His320 and Asp331 each contribute to the Zn(2+) site.

Belongs to the peptidase M35 family. The cofactor is Zn(2+).

The protein localises to the secreted. It carries out the reaction Preferential cleavage of bonds with hydrophobic residues in P1'. Also 3-Asn-|-Gln-4 and 8-Gly-|-Ser-9 bonds in insulin B chain.. Probable secreted metalloprotease that shows high activities on basic nuclear substrates such as histone and protamine. May be involved in virulence. In Arthroderma benhamiae (strain ATCC MYA-4681 / CBS 112371) (Trichophyton mentagrophytes), this protein is Probable neutral protease 2 homolog ARB_03949.